The chain runs to 352 residues: Protein RecA (352 aa).

66-73 (GPESSGKT) is a binding site for ATP. The disordered stretch occupies residues 330–352 (TKDDSKVATVDKANEEQAAEPVQ).

The protein belongs to the RecA family.

The protein localises to the cytoplasm. Can catalyze the hydrolysis of ATP in the presence of single-stranded DNA, the ATP-dependent uptake of single-stranded DNA by duplex DNA, and the ATP-dependent hybridization of homologous single-stranded DNAs. It interacts with LexA causing its activation and leading to its autocatalytic cleavage. This Psychrobacter cryohalolentis (strain ATCC BAA-1226 / DSM 17306 / VKM B-2378 / K5) protein is Protein RecA.